A 216-amino-acid chain; its full sequence is Glycerol-3-phosphate acyltransferase 3 (216 aa).

The next 5 membrane-spanning stretches (helical) occupy residues 6 to 26 (LLLV…YLVS), 58 to 78 (LVAS…GLVI), 92 to 112 (LLFA…WPVF), 125 to 145 (FGGM…VLII), and 158 to 178 (ITGV…SGFP).

This sequence belongs to the PlsY family. Probably interacts with PlsX.

It is found in the cell membrane. It carries out the reaction an acyl phosphate + sn-glycerol 3-phosphate = a 1-acyl-sn-glycero-3-phosphate + phosphate. The protein operates within lipid metabolism; phospholipid metabolism. Functionally, catalyzes the transfer of an acyl group from acyl-phosphate (acyl-PO(4)) to glycerol-3-phosphate (G3P) to form lysophosphatidic acid (LPA). This enzyme utilizes acyl-phosphate as fatty acyl donor, but not acyl-CoA or acyl-ACP. This is Glycerol-3-phosphate acyltransferase 3 from Dehalococcoides mccartyi (strain CBDB1).